A 122-amino-acid chain; its full sequence is Large ribosomal subunit protein uL14 (122 aa).

It belongs to the universal ribosomal protein uL14 family. In terms of assembly, part of the 50S ribosomal subunit. Forms a cluster with proteins L3 and L19. In the 70S ribosome, L14 and L19 interact and together make contacts with the 16S rRNA in bridges B5 and B8.

Functionally, binds to 23S rRNA. Forms part of two intersubunit bridges in the 70S ribosome. This Campylobacter concisus (strain 13826) protein is Large ribosomal subunit protein uL14.